The primary structure comprises 160 residues: Photosystem II extrinsic protein V (160 aa).

The N-terminal stretch at 1-25 (MKRFFLVAIASVLFFFNTMVGSANA) is a signal peptide. Residues Cys-62, Cys-65, His-66, and His-117 each coordinate heme c.

It belongs to the cytochrome c family. PsbV subfamily. In terms of assembly, PSII is composed of 1 copy each of membrane proteins PsbA, PsbB, PsbC, PsbD, PsbE, PsbF, PsbH, PsbI, PsbJ, PsbK, PsbL, PsbM, PsbT, PsbX, PsbY, PsbZ, Psb30/Ycf12, peripheral proteins PsbO, CyanoQ (PsbQ), PsbU, PsbV and a large number of cofactors. It forms dimeric complexes. The cyanobacterial oxygen-evolving complex is composed of PsbO, CyanoQ (PsbQ), PsbV and PsbU. Heme c serves as cofactor.

It is found in the cellular thylakoid membrane. One of the extrinsic, lumenal subunits of photosystem II (PSII). PSII is a light-driven water plastoquinone oxidoreductase, using light energy to abstract electrons from H(2)O, generating a proton gradient subsequently used for ATP formation. The extrinsic proteins stabilize the structure of photosystem II oxygen-evolving complex (OEC), the ion environment of oxygen evolution and protect the OEC against heat-induced inactivation. Low-potential cytochrome c that plays a role in the OEC of PSII, required for normal function or stabilization of PSII. The polypeptide is Photosystem II extrinsic protein V (Synechocystis sp. (strain ATCC 27184 / PCC 6803 / Kazusa)).